Here is a 573-residue protein sequence, read N- to C-terminus: Peptidyl-prolyl cis-trans isomerase-like 2 (573 aa).

Residues 37-119 form the U-box domain; that stretch reads QRLPFDCCAL…GNLHDPITYK (83 aa). The tract at residues 223 to 247 is disordered; it reads KNKSGQSPAPTPSKIDDGKGQEKKE. Residues 236-247 show a composition bias toward basic and acidic residues; the sequence is KIDDGKGQEKKE. Positions 312–469 constitute a PPIase cyclophilin-type domain; it reads SKAYATITTN…RDIVIQGVTV (158 aa). Basic and acidic residues predominate over residues 489–510; that stretch reads DQSDAALKRRAEAQKEREKDRT. The disordered stretch occupies residues 489 to 515; that stretch reads DQSDAALKRRAEAQKEREKDRTTWLGT.

The protein belongs to the cyclophilin-type PPIase family. PPIL2 subfamily.

The protein localises to the nucleus. The catalysed reaction is [protein]-peptidylproline (omega=180) = [protein]-peptidylproline (omega=0). The enzyme catalyses S-ubiquitinyl-[E2 ubiquitin-conjugating enzyme]-L-cysteine + [acceptor protein]-L-lysine = [E2 ubiquitin-conjugating enzyme]-L-cysteine + N(6)-ubiquitinyl-[acceptor protein]-L-lysine.. It participates in protein modification; protein ubiquitination. Its function is as follows. May catalyze the cis-trans isomerization of proline imidic peptide bonds in oligopeptides thereby assisting the folding of proteins. May also function as a chaperone, playing a role in intracellular transport of proteins. May also have a protein ubiquitin ligase activity acting as an E3 ubiquitin protein ligase or as a ubiquitin-ubiquitin ligase promoting elongation of ubiquitin chains on proteins. The sequence is that of Peptidyl-prolyl cis-trans isomerase-like 2 (CYP8) from Cryptococcus neoformans var. neoformans serotype D (strain B-3501A) (Filobasidiella neoformans).